Consider the following 262-residue polypeptide: Mediator of RNA polymerase II transcription subunit 8 (262 aa).

A coiled-coil region spans residues 168–211 (LEEKEMGVKNVITGLKRQLDEGDEEDEEEEEEEEDMQGEEMEVV). Positions 183-206 (KRQLDEGDEEDEEEEEEEEDMQGE) are disordered. The segment covering 188–206 (EGDEEDEEEEEEEEDMQGE) has biased composition (acidic residues).

Belongs to the Mediator complex subunit 8 family. Component of the Mediator complex.

It is found in the nucleus. Component of the Mediator complex, a coactivator involved in the regulated transcription of nearly all RNA polymerase II-dependent genes. Mediator functions as a bridge to convey information from gene-specific regulatory proteins to the basal RNA polymerase II transcription machinery. Mediator is recruited to promoters by direct interactions with regulatory proteins and serves as a scaffold for the assembly of a functional preinitiation complex with RNA polymerase II and the general transcription factors. This chain is Mediator of RNA polymerase II transcription subunit 8 (MED8), found in Coccidioides immitis (strain RS) (Valley fever fungus).